Reading from the N-terminus, the 120-residue chain is Ribonuclease P protein component 4 (120 aa).

4 residues coordinate Zn(2+): C68, C71, C97, and C100.

This sequence belongs to the eukaryotic/archaeal RNase P protein component 4 family. As to quaternary structure, consists of a catalytic RNA component and at least 5 protein subunits. Forms a heterodimeric subcomplex with Rnp1. Reconstituted enzyme missing individual protein subunits is suboptimally active, showing each subunit contributes to optimization of activity. Requires Zn(2+) as cofactor.

The protein localises to the cytoplasm. It catalyses the reaction Endonucleolytic cleavage of RNA, removing 5'-extranucleotides from tRNA precursor.. Part of ribonuclease P, a protein complex that generates mature tRNA molecules by cleaving their 5'-ends. Binds RNase P RNA. The polypeptide is Ribonuclease P protein component 4 (Pyrococcus horikoshii (strain ATCC 700860 / DSM 12428 / JCM 9974 / NBRC 100139 / OT-3)).